Here is a 362-residue protein sequence, read N- to C-terminus: 2-oxoglutarate-dependent dioxygenase lolO2 (362 aa).

The Fe2OG dioxygenase domain occupies 199–312 (TWNYFLGQPV…RYSLVFFGHL (114 aa)). Residues H222, D224, and H280 each contribute to the Fe cation site. Residue R303 participates in 2-oxoglutarate binding.

This sequence belongs to the iron/ascorbate-dependent oxidoreductase family. It depends on Fe(2+) as a cofactor.

It functions in the pathway alkaloid biosynthesis. Functionally, 2-oxoglutarate-dependent dioxygenase; part of the gene cluster that mediates the biosynthesis of loline alkaloids, potent insecticidal agents composed of a pyrrolizidine ring system and an uncommon ether bridge linking carbons 2 and 7. Lolines are structurally differentiated by the various modifications of the L-amino group and include norloline, loline, N-methylloline, N-acetylloline, N-acetylnorloline, and N-formylloline. The first committed step is the condensation of O-acetyl-L-homoserine (derived from L-aspartic acid) and L-proline, probably catalyzed by the gamma-type pyridoxal 5'-phosphate(PLP)-dependent enzyme lolC, to give the diamino diacid, NACPP. Ensuing cyclization, decarboxylation, and acetylation steps yield 1-exo-acetamidopyrrolizidine (AcAP). LolO is required for installation of the ether bridge upon the pathway intermediate, 1-exo-acetamidopyrrolizidine (AcAP). In sequential 2-oxoglutarate- and O(2)-consuming steps, lolO removes hydrogens from C2 and C7 of AcAP to form both carbon-oxygen bonds in N-acetylnorloline (NANL), the precursor to all other lolines. The enzymes lolD, lolE, lolF and lolT have also been proposed to be involved in the ether-bridge installation. Further processing of the exocyclic moiety of NANL by fungal N-acetamidase (LolN), methyltransferase (LolM), and cytochrome P450 (LolP) enzymes, with occasional involvement of a plant acetyltransferase, generates the other known lolines. LolN transforms NANL to norlonine which is monomethylated and dimethylated to respectively lonine and N-methyllonine (NML) by lolM. LolP catalyzes hydroxylation of the methyl group in N-methylloline (NML) and further oxygenation to N-formylloline (NFL). A plant acetyltransferase is responsible for the acetylation of loline to form N-acetylloline (NAL). LolA might interact with aspartate kinase to prevent feedback inhibition of its activity by these end products and thereby promote production of L-homoserine from L-aspartate. This Epichloe uncinata (Endophyte fungus) protein is 2-oxoglutarate-dependent dioxygenase lolO2.